We begin with the raw amino-acid sequence, 223 residues long: Small ribosomal subunit protein uS3 (223 aa).

The 69-residue stretch at 38 to 106 (IREFIAKQLT…RVHINIVEIK (69 aa)) folds into the KH type-2 domain.

Belongs to the universal ribosomal protein uS3 family. As to quaternary structure, part of the 30S ribosomal subunit. Forms a tight complex with proteins S10 and S14.

Functionally, binds the lower part of the 30S subunit head. Binds mRNA in the 70S ribosome, positioning it for translation. This chain is Small ribosomal subunit protein uS3, found in Pediococcus pentosaceus (strain ATCC 25745 / CCUG 21536 / LMG 10740 / 183-1w).